The following is a 359-amino-acid chain: Phosphoserine aminotransferase (359 aa).

Arg-41 provides a ligand contact to L-glutamate. Pyridoxal 5'-phosphate is bound by residues 75–76, Trp-101, Thr-152, Asp-171, and Gln-194; that span reads AS. At Lys-195 the chain carries N6-(pyridoxal phosphate)lysine. 236 to 237 is a binding site for pyridoxal 5'-phosphate; that stretch reads NT.

It belongs to the class-V pyridoxal-phosphate-dependent aminotransferase family. SerC subfamily. In terms of assembly, homodimer. It depends on pyridoxal 5'-phosphate as a cofactor.

Its subcellular location is the cytoplasm. It catalyses the reaction O-phospho-L-serine + 2-oxoglutarate = 3-phosphooxypyruvate + L-glutamate. The enzyme catalyses 4-(phosphooxy)-L-threonine + 2-oxoglutarate = (R)-3-hydroxy-2-oxo-4-phosphooxybutanoate + L-glutamate. The protein operates within amino-acid biosynthesis; L-serine biosynthesis; L-serine from 3-phospho-D-glycerate: step 2/3. It functions in the pathway cofactor biosynthesis; pyridoxine 5'-phosphate biosynthesis; pyridoxine 5'-phosphate from D-erythrose 4-phosphate: step 3/5. Its function is as follows. Catalyzes the reversible conversion of 3-phosphohydroxypyruvate to phosphoserine and of 3-hydroxy-2-oxo-4-phosphonooxybutanoate to phosphohydroxythreonine. The polypeptide is Phosphoserine aminotransferase (Acinetobacter baylyi (strain ATCC 33305 / BD413 / ADP1)).